The primary structure comprises 474 residues: Calcitonin receptor (474 aa).

The first 24 residues, 1–24 (MRFTFTSRCLALFLLLNHPTPILP), serve as a signal peptide directing secretion. The Extracellular segment spans residues 25–146 (AFSNQTYPTI…FTPEKLKNAY (122 aa)). N-linked (GlcNAc...) asparagine glycans are attached at residues Asn28, Asn73, Asn125, and Asn130. 3 cysteine pairs are disulfide-bonded: Cys55-Cys81, Cys72-Cys112, and Cys95-Cys134. A helical membrane pass occupies residues 147 to 169 (VLYYLAIVGHSLSIFTLVISLGI). Residues 170 to 181 (FVFFRSLGCQRV) lie on the Cytoplasmic side of the membrane. Residues 182–202 (TLHKNMFLTYILNSMIIIIHL) traverse the membrane as a helical segment. The Extracellular portion of the chain corresponds to 203-219 (VEVVPNGELVRRDPVSC). An intrachain disulfide couples Cys219 to Cys289. A helical transmembrane segment spans residues 220–242 (KILHFFHQYMMACNYFWMLCEGI). At 243–259 (YLHTLIVVAVFTEKQRL) the chain is on the cytoplasmic side. A helical membrane pass occupies residues 260-280 (RWYYLLGWGFPLVPTTIHAIT). At 281–296 (RAVYFNDNCWLSVETH) the chain is on the extracellular side. A helical transmembrane segment spans residues 297–320 (LLYIIHGPVMAALVVNFFFLLNIV). The Cytoplasmic portion of the chain corresponds to 321–340 (RVLVTKMRETHEAESHMYLK). Residues 341-359 (AVKATMILVPLLGIQFVVF) traverse the membrane as a helical segment. The Extracellular segment spans residues 360 to 367 (PWRPSNKM). A helical transmembrane segment spans residues 368–394 (LGKIYDYVMHSLIHFQGFFVATIYCFC). The Cytoplasmic portion of the chain corresponds to 395–474 (NNEVQTTVKR…LNIIEQESSA (80 aa)).

Belongs to the G-protein coupled receptor 2 family. In terms of assembly, heterodimer of CALCR and RAMP1, RAMP2 or RAMP3; the receptor complexes function as AMYR1, AMYR2 and AMYR3 receptors, respectively, and respond to amylin/IAPP, calcitonin/CT and CGRP1 ligands. Interacts with GPRASP2.

Its subcellular location is the cell membrane. Its activity is regulated as follows. Sensitive to cholera toxin. Functionally, g protein-coupled receptor activated by ligand peptides amylin (IAPP), calcitonin (CT/CALCA) and calcitonin gene-related peptide type 1 (CGRP1/CALCA). CALCR interacts with receptor-activity-modifying proteins RAMP1, 2 and 3 to form receptor complexes AMYR1, 2 and 3, respectively. IAPP, CT and CGRP1 activate CALCR and AMYRs with distinct modes of receptor activation resulting in specific phenotypes. Ligand binding causes a conformation change that triggers signaling via guanine nucleotide-binding proteins (G proteins) and modulates the activity of downstream effectors. Activates cAMP-dependent pathway. In terms of biological role, non-functional protein. Unable to couple to G proteins and activate adenylyl cyclase. Does not undergo receptor internalization following ligand binding. In Homo sapiens (Human), this protein is Calcitonin receptor.